A 139-amino-acid chain; its full sequence is Large-conductance mechanosensitive channel (139 aa).

A run of 2 helical transmembrane segments spans residues 14-34 and 81-101; these read VIDLAVGVIVGAAFTAIINSL and GSFLTAVINFLLIAFVVFMIV.

It belongs to the MscL family. As to quaternary structure, homopentamer.

The protein resides in the cell membrane. Channel that opens in response to stretch forces in the membrane lipid bilayer. May participate in the regulation of osmotic pressure changes within the cell. This chain is Large-conductance mechanosensitive channel, found in Chloroflexus aurantiacus (strain ATCC 29366 / DSM 635 / J-10-fl).